Reading from the N-terminus, the 140-residue chain is 6,7-dimethyl-8-ribityllumazine synthase (140 aa).

5-amino-6-(D-ribitylamino)uracil contacts are provided by residues F11, 43–45, and 67–69; these read SFD and CVI. 72–73 contacts (2S)-2-hydroxy-3-oxobutyl phosphate; sequence DT. Catalysis depends on H75, which acts as the Proton donor. Residue L100 coordinates 5-amino-6-(D-ribitylamino)uracil. R115 is a binding site for (2S)-2-hydroxy-3-oxobutyl phosphate.

The protein belongs to the DMRL synthase family. In terms of assembly, forms an icosahedral capsid composed of 60 subunits, arranged as a dodecamer of pentamers.

It carries out the reaction (2S)-2-hydroxy-3-oxobutyl phosphate + 5-amino-6-(D-ribitylamino)uracil = 6,7-dimethyl-8-(1-D-ribityl)lumazine + phosphate + 2 H2O + H(+). Its pathway is cofactor biosynthesis; riboflavin biosynthesis; riboflavin from 2-hydroxy-3-oxobutyl phosphate and 5-amino-6-(D-ribitylamino)uracil: step 1/2. Catalyzes the formation of 6,7-dimethyl-8-ribityllumazine by condensation of 5-amino-6-(D-ribitylamino)uracil with 3,4-dihydroxy-2-butanone 4-phosphate. This is the penultimate step in the biosynthesis of riboflavin. This Methanococcus vannielii (strain ATCC 35089 / DSM 1224 / JCM 13029 / OCM 148 / SB) protein is 6,7-dimethyl-8-ribityllumazine synthase.